The sequence spans 308 residues: Acetyl-coenzyme A carboxylase carboxyl transferase subunit beta 1 (308 aa).

Residues 25–294 (VWTKCTSCEQ…PLVVSVNESP (270 aa)) enclose the CoA carboxyltransferase N-terminal domain. The Zn(2+) site is built by Cys29, Cys32, Cys48, and Cys51. A C4-type zinc finger spans residues 29-51 (CTSCEQVLYHAELERNLEVCPKC). The segment at 288–308 (VSVNESPNEEPYSVPEVDEKG) is disordered.

Belongs to the AccD/PCCB family. As to quaternary structure, acetyl-CoA carboxylase is a heterohexamer composed of biotin carboxyl carrier protein (AccB), biotin carboxylase (AccC) and two subunits each of ACCase subunit alpha (AccA) and ACCase subunit beta (AccD). Zn(2+) is required as a cofactor.

The protein resides in the cytoplasm. The catalysed reaction is N(6)-carboxybiotinyl-L-lysyl-[protein] + acetyl-CoA = N(6)-biotinyl-L-lysyl-[protein] + malonyl-CoA. It functions in the pathway lipid metabolism; malonyl-CoA biosynthesis; malonyl-CoA from acetyl-CoA: step 1/1. Its function is as follows. Component of the acetyl coenzyme A carboxylase (ACC) complex. Biotin carboxylase (BC) catalyzes the carboxylation of biotin on its carrier protein (BCCP) and then the CO(2) group is transferred by the transcarboxylase to acetyl-CoA to form malonyl-CoA. The sequence is that of Acetyl-coenzyme A carboxylase carboxyl transferase subunit beta 1 from Vibrio parahaemolyticus serotype O3:K6 (strain RIMD 2210633).